The sequence spans 436 residues: Ribulose bisphosphate carboxylase large chain (436 aa).

Positions 104 and 154 each coordinate substrate. The active-site Proton acceptor is the Lys156. Substrate is bound at residue Lys158. Mg(2+) is bound by residues Lys182, Asp184, and Glu185. Lys182 carries the post-translational modification N6-carboxylysine. The active-site Proton acceptor is the His275. Substrate-binding residues include Arg276, His308, and Ser360.

This sequence belongs to the RuBisCO large chain family. Type I subfamily. In terms of assembly, heterohexadecamer of 8 large chains and 8 small chains; disulfide-linked. The disulfide link is formed within the large subunit homodimers. Mg(2+) is required as a cofactor. The disulfide bond which can form in the large chain dimeric partners within the hexadecamer appears to be associated with oxidative stress and protein turnover.

It is found in the plastid. The protein localises to the chloroplast. The enzyme catalyses 2 (2R)-3-phosphoglycerate + 2 H(+) = D-ribulose 1,5-bisphosphate + CO2 + H2O. It catalyses the reaction D-ribulose 1,5-bisphosphate + O2 = 2-phosphoglycolate + (2R)-3-phosphoglycerate + 2 H(+). Functionally, ruBisCO catalyzes two reactions: the carboxylation of D-ribulose 1,5-bisphosphate, the primary event in carbon dioxide fixation, as well as the oxidative fragmentation of the pentose substrate in the photorespiration process. Both reactions occur simultaneously and in competition at the same active site. This Euglena anabaena (Euglenaria anabaena) protein is Ribulose bisphosphate carboxylase large chain.